Here is a 120-residue protein sequence, read N- to C-terminus: Large ribosomal subunit protein uL18 (120 aa).

Residues Met-1–Arg-10 are compositionally biased toward basic and acidic residues. The segment at Met-1–Arg-26 is disordered. The segment covering Ser-11–Val-20 has biased composition (basic residues).

This sequence belongs to the universal ribosomal protein uL18 family. In terms of assembly, part of the 50S ribosomal subunit; part of the 5S rRNA/L5/L18/L25 subcomplex. Contacts the 5S and 23S rRNAs.

This is one of the proteins that bind and probably mediate the attachment of the 5S RNA into the large ribosomal subunit, where it forms part of the central protuberance. The protein is Large ribosomal subunit protein uL18 of Cyanothece sp. (strain PCC 7425 / ATCC 29141).